A 194-amino-acid chain; its full sequence is PBAN-type neuropeptides (194 aa).

The N-terminal stretch at 1-23 (MFNQTQLFVFLAVFTTSSVLGNN) is a signal peptide. Position 47 is a leucine amide (Leu47). Positions 51–94 (SLRISTEDNRQAFFKLLEAADALKYYYDQLPYEMQADEPETRVT) are excised as a propeptide. Residues Leu103, Leu123, Leu159, and Leu169 each carry the leucine amide modification. Residues 172 to 194 (ELSYDMMPNKIRVVRSTNKTRST) constitute a propeptide that is removed on maturation.

Belongs to the pyrokinin family. Expressed in the subesophageal ganglions. Not found in corpora cardiaca, corpora allata and thoracic ganglia.

The protein resides in the secreted. Its function is as follows. A hormone that controls sex pheromone production in females and pheromone responsiveness in male. Also mediates visceral muscle contractile activity (myotropic activity). In Helicoverpa zea (Corn earworm moth), this protein is PBAN-type neuropeptides.